We begin with the raw amino-acid sequence, 673 residues long: DNA ligase (673 aa).

NAD(+) is bound by residues 32–36 (DHVYD), 81–82 (SL), and Glu111. Catalysis depends on Lys113, which acts as the N6-AMP-lysine intermediate. Arg134, Glu171, Lys286, and Lys310 together coordinate NAD(+). Zn(2+) is bound by residues Cys404, Cys407, Cys422, and Cys428. A BRCT domain is found at 595 to 673 (NIIDEYKNKT…NEFWKKDNNF (79 aa)).

It belongs to the NAD-dependent DNA ligase family. LigA subfamily. It depends on Mg(2+) as a cofactor. Mn(2+) serves as cofactor.

The catalysed reaction is NAD(+) + (deoxyribonucleotide)n-3'-hydroxyl + 5'-phospho-(deoxyribonucleotide)m = (deoxyribonucleotide)n+m + AMP + beta-nicotinamide D-nucleotide.. DNA ligase that catalyzes the formation of phosphodiester linkages between 5'-phosphoryl and 3'-hydroxyl groups in double-stranded DNA using NAD as a coenzyme and as the energy source for the reaction. It is essential for DNA replication and repair of damaged DNA. The polypeptide is DNA ligase (Ureaplasma urealyticum serovar 10 (strain ATCC 33699 / Western)).